The primary structure comprises 73 residues: MSAEPANGPTEDQVEILEYNFNKVNRHPDPTTLCLIAAEAGLSEEETQKWFKQRLAQWRRSEGLPSECRSVTD.

The segment at residues 3 to 62 (AEPANGPTEDQVEILEYNFNKVNRHPDPTTLCLIAAEAGLSEEETQKWFKQRLAQWRRSE) is a DNA-binding region (homeobox; degenerate).

Interacts with serum response factor (SRF). Component of a large complex containing histone deacetylases such as HDAC2. Interacts with the acetylated forms of HSPA1A and HSPA1B. Interacts with HSPA8.

The protein localises to the nucleus. It localises to the cytoplasm. Its function is as follows. Atypical homeodomain protein which does not bind DNA and is required to modulate cardiac growth and development. Acts via its interaction with SRF, thereby modulating the expression of SRF-dependent cardiac-specific genes and cardiac development. Prevents SRF-dependent transcription either by inhibiting SRF binding to DNA or by recruiting histone deacetylase (HDAC) proteins that prevent transcription by SRF. Overexpression causes cardiac hypertrophy. Acts as a co-chaperone for HSPA1A and HSPA1B chaperone proteins and assists in chaperone-mediated protein refolding. The polypeptide is Homeodomain-only protein (HOPX) (Sus scrofa (Pig)).